Reading from the N-terminus, the 348-residue chain is Probable dual-specificity RNA methyltransferase RlmN (348 aa).

The Proton acceptor role is filled by E92. The Radical SAM core domain maps to 98 to 331 (HPDRVTACIS…NEIRREKGTD (234 aa)). The cysteines at positions 105 and 336 are disulfide-linked. 3 residues coordinate [4Fe-4S] cluster: C112, C116, and C119. Residues 159–160 (GE), S191, 214–216 (SLH), and N290 contribute to the S-adenosyl-L-methionine site. Residue C336 is the S-methylcysteine intermediate of the active site.

Belongs to the radical SAM superfamily. RlmN family. It depends on [4Fe-4S] cluster as a cofactor.

Its subcellular location is the cytoplasm. It catalyses the reaction adenosine(2503) in 23S rRNA + 2 reduced [2Fe-2S]-[ferredoxin] + 2 S-adenosyl-L-methionine = 2-methyladenosine(2503) in 23S rRNA + 5'-deoxyadenosine + L-methionine + 2 oxidized [2Fe-2S]-[ferredoxin] + S-adenosyl-L-homocysteine. The catalysed reaction is adenosine(37) in tRNA + 2 reduced [2Fe-2S]-[ferredoxin] + 2 S-adenosyl-L-methionine = 2-methyladenosine(37) in tRNA + 5'-deoxyadenosine + L-methionine + 2 oxidized [2Fe-2S]-[ferredoxin] + S-adenosyl-L-homocysteine. Its function is as follows. Specifically methylates position 2 of adenine 2503 in 23S rRNA and position 2 of adenine 37 in tRNAs. The sequence is that of Probable dual-specificity RNA methyltransferase RlmN from Fervidobacterium nodosum (strain ATCC 35602 / DSM 5306 / Rt17-B1).